Reading from the N-terminus, the 1939-residue chain is Myosin heavy chain, skeletal muscle, adult (1939 aa).

Ala2 is subject to N-acetylalanine. The Myosin N-terminal SH3-like domain occupies 34 to 83 (DAKSSVFVVHPKESFVKGTIQSKEGGKVTVKTEGGETLTVKEDQVFSMNP). Lys36 bears the N6-methyllysine mark. A Myosin motor domain is found at 87–781 (DKIEDMAMMT…LLGLLEEMRD (695 aa)). Lys131 is subject to N6,N6,N6-trimethyllysine. ATP is bound at residue 180 to 187 (GESGAGKT). An N6,N6,N6-trimethyllysine modification is found at Lys552. The segment at 658-680 (LNKLMANLRSTHPHFVRCIIPNE) is actin-binding. His756 is modified (pros-methylhistidine). Positions 760–774 (RFGHTKVFFKAGLLG) are actin-binding. The IQ domain occupies 784-813 (LAEIITRTQARCRGFLMRVEYRRMVERRES). The hinge stretch occupies residues 839–841 (IKP). Residues 842–1939 (LLKSAESEKE…IHGKKIEEEE (1098 aa)) adopt a coiled-coil conformation.

The protein belongs to the TRAFAC class myosin-kinesin ATPase superfamily. Myosin family. Muscle myosin is a hexameric protein that consists of 2 heavy chain subunits (MHC), 2 alkali light chain subunits (MLC) and 2 regulatory light chain subunits (MLC-2).

It localises to the cytoplasm. Its subcellular location is the myofibril. Muscle contraction. Myosin is a protein that binds to F-actin and has ATPase activity that is activated by F-actin. In Gallus gallus (Chicken), this protein is Myosin heavy chain, skeletal muscle, adult.